Consider the following 183-residue polypeptide: DNA-directed RNA polymerase subunit Rpo7 (183 aa).

One can recognise an S1 motif domain in the interval 82 to 164 (HEVIEGEVSQ…RLPRIALTMK (83 aa)).

Belongs to the eukaryotic RPB7/RPC8 RNA polymerase subunit family. Part of the 13-subunit RNA polymerase complex. Forms a stalk with Rpo4 that extends from the main structure.

It is found in the cytoplasm. The enzyme catalyses RNA(n) + a ribonucleoside 5'-triphosphate = RNA(n+1) + diphosphate. DNA-dependent RNA polymerase (RNAP) catalyzes the transcription of DNA into RNA using the four ribonucleoside triphosphates as substrates. In terms of biological role, reconstitution experiments show this subunit is required for basic activity. The polypeptide is DNA-directed RNA polymerase subunit Rpo7 (Sulfolobus acidocaldarius (strain ATCC 33909 / DSM 639 / JCM 8929 / NBRC 15157 / NCIMB 11770)).